Reading from the N-terminus, the 689-residue chain is Protein CFAP20DC (689 aa).

Disordered stretches follow at residues 241 to 263, 333 to 423, and 584 to 659; these read LKSTSRERTETPSGSSSGNNRIE, SKES…GPSE, and ISTS…DLSV. Composition is skewed to polar residues over residues 251–260 and 343–359; these read TPSGSSSGNN and EESQSVPKDIFTFSSRP. Residues 394–405 are compositionally biased toward acidic residues; sequence SEDDFYGGDSSE. A compositionally biased stretch (polar residues) spans 409 to 421; the sequence is HSIQGSRGPTTGP. Over residues 584–593 the composition is skewed to low complexity; that stretch reads ISTSSDDTTT.

The chain is Protein CFAP20DC from Homo sapiens (Human).